We begin with the raw amino-acid sequence, 84 residues long: Large ribosomal subunit protein bL31B-2 (84 aa).

Belongs to the bacterial ribosomal protein bL31 family. Type B subfamily. Part of the 50S ribosomal subunit.

The sequence is that of Large ribosomal subunit protein bL31B-2 from Streptomyces coelicolor (strain ATCC BAA-471 / A3(2) / M145).